The sequence spans 700 residues: Glycine--tRNA ligase beta subunit (700 aa).

The protein belongs to the class-II aminoacyl-tRNA synthetase family. As to quaternary structure, tetramer of two alpha and two beta subunits.

It localises to the cytoplasm. The enzyme catalyses tRNA(Gly) + glycine + ATP = glycyl-tRNA(Gly) + AMP + diphosphate. The sequence is that of Glycine--tRNA ligase beta subunit from Magnetococcus marinus (strain ATCC BAA-1437 / JCM 17883 / MC-1).